A 254-amino-acid polypeptide reads, in one-letter code: Ubiquinone/menaquinone biosynthesis C-methyltransferase UbiE (254 aa).

S-adenosyl-L-methionine-binding positions include Thr77, Asp98, 126–127 (DA), and Ser143.

Belongs to the class I-like SAM-binding methyltransferase superfamily. MenG/UbiE family.

The enzyme catalyses a 2-demethylmenaquinol + S-adenosyl-L-methionine = a menaquinol + S-adenosyl-L-homocysteine + H(+). It carries out the reaction a 2-methoxy-6-(all-trans-polyprenyl)benzene-1,4-diol + S-adenosyl-L-methionine = a 5-methoxy-2-methyl-3-(all-trans-polyprenyl)benzene-1,4-diol + S-adenosyl-L-homocysteine + H(+). It participates in quinol/quinone metabolism; menaquinone biosynthesis; menaquinol from 1,4-dihydroxy-2-naphthoate: step 2/2. The protein operates within cofactor biosynthesis; ubiquinone biosynthesis. Its function is as follows. Methyltransferase required for the conversion of demethylmenaquinol (DMKH2) to menaquinol (MKH2) and the conversion of 2-polyprenyl-6-methoxy-1,4-benzoquinol (DDMQH2) to 2-polyprenyl-3-methyl-6-methoxy-1,4-benzoquinol (DMQH2). In Blochmanniella pennsylvanica (strain BPEN), this protein is Ubiquinone/menaquinone biosynthesis C-methyltransferase UbiE.